Here is a 433-residue protein sequence, read N- to C-terminus: MNVTMHSKKLLKPSIPTPNHLQKLNLSLLDQIQIPFYVGLIFHYETLSDNSDITLSKLESSLSETLTLYYHVAGRYNGTDCVIECNDQGIGYVETAFDVELHQFLLGEESNNLDLLVGLSGFLSETETPPLAAIQLNMFKCGGLVIGAQFNHIIGDMFTMSTFMNSWAKACRVGIKEVAHPTFGLAPLMPSAKVLNIPPPPSFEGVKFVSKRFVFNENAITRLRKEATEEDGDGDDDQKKKRPSRVDLVTAFLSKSLIEMDCAKKEQTKSRPSLMVHMMNLRKRTKLALENDVSGNFFIVVNAESKITVAPKITDLTESLGSACGEIISEVAKVDDAEVVSSMVLNSVREFYYEWGKGEKNVFLYTSWCRFPLYEVDFGWGIPSLVDTTAVPFGLIVLMDEAPAGDGIAVRACLSEHDMIQFQQHHQLLSYVS.

Catalysis depends on proton acceptor residues H152 and D377.

It belongs to the plant acyltransferase family. Post-translationally, the N-terminus is blocked. Expressed in petals, style, sepals and stamens. Very low expression in stigma and not detected in leaves.

It carries out the reaction benzyl alcohol + acetyl-CoA = benzyl acetate + CoA. The catalysed reaction is (E)-cinnamyl alcohol + acetyl-CoA = (E)-cinnamyl acetate + CoA. Involved in the biosynthesis of benzyl acetate, a major constituent of the floral scent. Can use benzylalcohol, cinnamylalcohol, 3-cis-hexene-1-ol or heptanol as substrates. Has some activity with 2-phenylethanol and 2-naphtalene-ethanol, but no activity with linalool, 2-hydroxybenzylalcohol, 3-hydroxybenzylalcohol or 4-hydroxybenzylalcohol. The sequence is that of Acetyl-CoA-benzylalcohol acetyltransferase (BEAT) from Clarkia breweri (Fairy fans).